The sequence spans 279 residues: uncharacterized protein (279 aa).

The segment at 136 to 279 (TSNATEASEK…FTSDSSDEED (144 aa)) is disordered. Residues 228–238 (NNGNGAVYSDS) are compositionally biased toward low complexity.

This is an uncharacterized protein from Invertebrate iridescent virus 3 (IIV-3).